Reading from the N-terminus, the 160-residue chain is Phosphopantetheine adenylyltransferase (160 aa).

Thr10 serves as a coordination point for substrate. ATP is bound by residues 10–11 (TF) and His18. Substrate is bound by residues Lys42, Leu74, and Arg88. ATP is bound by residues 89–91 (GLR), Glu99, and 124–130 (NSFISST).

The protein belongs to the bacterial CoaD family. As to quaternary structure, homohexamer. It depends on Mg(2+) as a cofactor.

It localises to the cytoplasm. It catalyses the reaction (R)-4'-phosphopantetheine + ATP + H(+) = 3'-dephospho-CoA + diphosphate. The protein operates within cofactor biosynthesis; coenzyme A biosynthesis; CoA from (R)-pantothenate: step 4/5. Functionally, reversibly transfers an adenylyl group from ATP to 4'-phosphopantetheine, yielding dephospho-CoA (dPCoA) and pyrophosphate. In Aeromonas hydrophila subsp. hydrophila (strain ATCC 7966 / DSM 30187 / BCRC 13018 / CCUG 14551 / JCM 1027 / KCTC 2358 / NCIMB 9240 / NCTC 8049), this protein is Phosphopantetheine adenylyltransferase.